The sequence spans 73 residues: Small ribosomal subunit protein bS18c (73 aa).

Belongs to the bacterial ribosomal protein bS18 family. Part of the 30S ribosomal subunit.

The protein resides in the plastid. It localises to the chloroplast. The polypeptide is Small ribosomal subunit protein bS18c (Rhodomonas salina (Cryptomonas salina)).